The primary structure comprises 405 residues: Glucan 1,3-beta-glucosidase A (405 aa).

The N-terminal stretch at 1–14 (MLPLLLCIVPYCWS) is a signal peptide. The active-site Proton donor is glutamate 199. 2 disulfide bridges follow: cysteine 280–cysteine 405 and cysteine 306–cysteine 332. The active-site Nucleophile is glutamate 298.

The protein belongs to the glycosyl hydrolase 5 (cellulase A) family. As to quaternary structure, monomer. Mn(2+) is required as a cofactor.

It is found in the secreted. The catalysed reaction is Successive hydrolysis of beta-D-glucose units from the non-reducing ends of (1-&gt;3)-beta-D-glucans, releasing alpha-glucose.. Beta-glucanases participate in the metabolism of beta-glucan, the main structural component of the cell wall. It could also function biosynthetically as a transglycosylase. The chain is Glucan 1,3-beta-glucosidase A (exgA) from Aspergillus oryzae (strain ATCC 42149 / RIB 40) (Yellow koji mold).